We begin with the raw amino-acid sequence, 266 residues long: Hydroxyethylthiazole kinase (266 aa).

Met43 is a substrate binding site. 2 residues coordinate ATP: Arg119 and Thr166. Gly193 lines the substrate pocket.

It belongs to the Thz kinase family. It depends on Mg(2+) as a cofactor.

The enzyme catalyses 5-(2-hydroxyethyl)-4-methylthiazole + ATP = 4-methyl-5-(2-phosphooxyethyl)-thiazole + ADP + H(+). Its pathway is cofactor biosynthesis; thiamine diphosphate biosynthesis; 4-methyl-5-(2-phosphoethyl)-thiazole from 5-(2-hydroxyethyl)-4-methylthiazole: step 1/1. Catalyzes the phosphorylation of the hydroxyl group of 4-methyl-5-beta-hydroxyethylthiazole (THZ). The chain is Hydroxyethylthiazole kinase from Methanococcus maripaludis (strain C7 / ATCC BAA-1331).